The following is a 194-amino-acid chain: NADH-quinone oxidoreductase subunit B (194 aa).

The span at 1-11 (MGMSQNNSTLV) shows a compositional bias: polar residues. Residues 1 to 22 (MGMSQNNSTLVAPQPKGIIDPA) are disordered. [4Fe-4S] cluster-binding residues include Cys-72, Cys-73, Cys-138, and Cys-168.

Belongs to the complex I 20 kDa subunit family. In terms of assembly, NDH-1 is composed of 14 different subunits. Subunits NuoB, C, D, E, F, and G constitute the peripheral sector of the complex. [4Fe-4S] cluster serves as cofactor.

It is found in the cell inner membrane. It carries out the reaction a quinone + NADH + 5 H(+)(in) = a quinol + NAD(+) + 4 H(+)(out). Its function is as follows. NDH-1 shuttles electrons from NADH, via FMN and iron-sulfur (Fe-S) centers, to quinones in the respiratory chain. The immediate electron acceptor for the enzyme in this species is believed to be ubiquinone. Couples the redox reaction to proton translocation (for every two electrons transferred, four hydrogen ions are translocated across the cytoplasmic membrane), and thus conserves the redox energy in a proton gradient. This is NADH-quinone oxidoreductase subunit B from Agrobacterium fabrum (strain C58 / ATCC 33970) (Agrobacterium tumefaciens (strain C58)).